The primary structure comprises 55 residues: Hirustasin (55 aa).

Cystine bridges form between C6–C17, C11–C22, C24–C44, C29–C48, and C33–C50. Residues 24-50 (CNEVHCRIRCKYGLKKDENGCEYPCSC) enclose the Antistasin-like domain.

The protein belongs to the protease inhibitor I15 (antistasin) family.

It localises to the secreted. Its function is as follows. Acts as an inhibitor of tissue kallikrein, trypsin, chymotrypsin and neutrophil cathepsin G. The chain is Hirustasin from Hirudo medicinalis (Medicinal leech).